The chain runs to 515 residues: Maturase K (515 aa).

This sequence belongs to the intron maturase 2 family. MatK subfamily.

The protein localises to the plastid. The protein resides in the chloroplast. Functionally, usually encoded in the trnK tRNA gene intron. Probably assists in splicing its own and other chloroplast group II introns. The sequence is that of Maturase K from Pinus banksiana (Jack pine).